The following is a 450-amino-acid chain: Bifunctional protein GlmU (450 aa).

The segment at 1–221 is pyrophosphorylase; it reads MRCIVLAAGM…SCEFIGINNR (221 aa). UDP-N-acetyl-alpha-D-glucosamine contacts are provided by residues 6–9, K20, Q69, 74–75, 96–98, G135, E150, N165, and N219; these read LAAG, GT, and YGD. D98 contributes to the Mg(2+) binding site. N219 serves as a coordination point for Mg(2+). Residues 222–242 form a linker region; it reads IQLAQAEKFRRQWILEELMIK. Residues 243-450 are N-acetyltransferase; sequence GVTIVDPETT…VIDKRKKEED (208 aa). UDP-N-acetyl-alpha-D-glucosamine-binding residues include R324 and K342. The active-site Proton acceptor is the H354. Positions 357 and 368 each coordinate UDP-N-acetyl-alpha-D-glucosamine. Acetyl-CoA-binding residues include A371, S396, A414, and R431.

In the N-terminal section; belongs to the N-acetylglucosamine-1-phosphate uridyltransferase family. It in the C-terminal section; belongs to the transferase hexapeptide repeat family. Homotrimer. Mg(2+) is required as a cofactor.

The protein resides in the cytoplasm. It catalyses the reaction alpha-D-glucosamine 1-phosphate + acetyl-CoA = N-acetyl-alpha-D-glucosamine 1-phosphate + CoA + H(+). The catalysed reaction is N-acetyl-alpha-D-glucosamine 1-phosphate + UTP + H(+) = UDP-N-acetyl-alpha-D-glucosamine + diphosphate. It functions in the pathway nucleotide-sugar biosynthesis; UDP-N-acetyl-alpha-D-glucosamine biosynthesis; N-acetyl-alpha-D-glucosamine 1-phosphate from alpha-D-glucosamine 6-phosphate (route II): step 2/2. Its pathway is nucleotide-sugar biosynthesis; UDP-N-acetyl-alpha-D-glucosamine biosynthesis; UDP-N-acetyl-alpha-D-glucosamine from N-acetyl-alpha-D-glucosamine 1-phosphate: step 1/1. The protein operates within bacterial outer membrane biogenesis; LPS lipid A biosynthesis. In terms of biological role, catalyzes the last two sequential reactions in the de novo biosynthetic pathway for UDP-N-acetylglucosamine (UDP-GlcNAc). The C-terminal domain catalyzes the transfer of acetyl group from acetyl coenzyme A to glucosamine-1-phosphate (GlcN-1-P) to produce N-acetylglucosamine-1-phosphate (GlcNAc-1-P), which is converted into UDP-GlcNAc by the transfer of uridine 5-monophosphate (from uridine 5-triphosphate), a reaction catalyzed by the N-terminal domain. This is Bifunctional protein GlmU from Pseudothermotoga lettingae (strain ATCC BAA-301 / DSM 14385 / NBRC 107922 / TMO) (Thermotoga lettingae).